A 69-amino-acid polypeptide reads, in one-letter code: UPF0337 protein RB0906 (69 aa).

The protein belongs to the UPF0337 (CsbD) family.

The polypeptide is UPF0337 protein RB0906 (Rhizobium meliloti (strain 1021) (Ensifer meliloti)).